A 206-amino-acid polypeptide reads, in one-letter code: 2,3-bisphosphoglycerate-dependent phosphoglycerate mutase (206 aa).

Residues Arg-9–Asn-16, Thr-22–Gly-23, Arg-61, Glu-88–Tyr-91, Lys-99, Arg-115–Arg-116, and Gly-159–Asn-160 contribute to the substrate site. Residue His-10 is the Tele-phosphohistidine intermediate of the active site. Catalysis depends on Glu-88, which acts as the Proton donor/acceptor.

The protein belongs to the phosphoglycerate mutase family. BPG-dependent PGAM subfamily. Homodimer.

It catalyses the reaction (2R)-2-phosphoglycerate = (2R)-3-phosphoglycerate. It participates in carbohydrate degradation; glycolysis; pyruvate from D-glyceraldehyde 3-phosphate: step 3/5. Functionally, catalyzes the interconversion of 2-phosphoglycerate and 3-phosphoglycerate. In Bartonella bacilliformis (strain ATCC 35685 / KC583 / Herrer 020/F12,63), this protein is 2,3-bisphosphoglycerate-dependent phosphoglycerate mutase.